The following is a 159-amino-acid chain: SsrA-binding protein (159 aa).

Belongs to the SmpB family.

The protein localises to the cytoplasm. In terms of biological role, required for rescue of stalled ribosomes mediated by trans-translation. Binds to transfer-messenger RNA (tmRNA), required for stable association of tmRNA with ribosomes. tmRNA and SmpB together mimic tRNA shape, replacing the anticodon stem-loop with SmpB. tmRNA is encoded by the ssrA gene; the 2 termini fold to resemble tRNA(Ala) and it encodes a 'tag peptide', a short internal open reading frame. During trans-translation Ala-aminoacylated tmRNA acts like a tRNA, entering the A-site of stalled ribosomes, displacing the stalled mRNA. The ribosome then switches to translate the ORF on the tmRNA; the nascent peptide is terminated with the 'tag peptide' encoded by the tmRNA and targeted for degradation. The ribosome is freed to recommence translation, which seems to be the essential function of trans-translation. This is SsrA-binding protein from Frankia casuarinae (strain DSM 45818 / CECT 9043 / HFP020203 / CcI3).